The chain runs to 276 residues: MKIVVLGGSGFLGHNICKLAIAKGYEVVSVSRRGAGGLHNKEPWMDDVEWETLDAQKDPNSLLPVLRDASAVVNSVGILMENNYKKILQNPRGPVSHLINSLSSNMFKTGQNPLAPKPEEAKQSKNKVTFEAINRDLAIETAKIAAKANVPVYCYVSAHAAAPGLDPRYIKTKREAEREISKISNLRSIFLRPGFMYNFNDRPFTGALASLFTVSSSINRATSGALNFLGTASAEPLPSEEVALAALEAISDPSVKGPVEISELKSMAHKFKQKSL.

Belongs to the NAD(P)-dependent epimerase/dehydratase family.

It localises to the mitochondrion. Functionally, acts in the coenzyme Q biosynthetic pathway. This Schizosaccharomyces pombe (strain 972 / ATCC 24843) (Fission yeast) protein is Ubiquinone biosynthesis protein coq11, mitochondrial.